The following is a 316-amino-acid chain: HTH-type transcriptional regulator cbl (316 aa).

The HTH lysR-type domain occupies 1–59 (MNFQQLKIIREAARQDYNLTEVANMLYTSQSGVSRHIRELEEELGIEIFIRRGKRLLGM). The H-T-H motif DNA-binding region spans 19 to 38 (LTEVANMLYTSQSGVSRHIR).

It belongs to the LysR transcriptional regulatory family.

Its function is as follows. May be an accessory regulatory protein within the cys regulon. The polypeptide is HTH-type transcriptional regulator cbl (cbl) (Klebsiella aerogenes (Enterobacter aerogenes)).